A 278-amino-acid polypeptide reads, in one-letter code: Alpha-tocopherol transfer protein (278 aa).

The CRAL-TRIO domain maps to 88 to 253 (RPRSILGLLK…EYGGKEFSME (166 aa)). Asp185 contacts a 1,2-diacyl-sn-glycero-3-phospho-(1D-myo-inositol-3,4-bisphosphate). (+)-alpha-tocopherol is bound at residue Phe187. 190–192 (KVR) provides a ligand contact to a 1,2-diacyl-sn-glycero-3-phospho-(1D-myo-inositol-3,4-bisphosphate). 208–211 (SMIK) contacts a 1,2-diacyl-sn-glycero-3-phospho-(1D-myo-inositol-4,5-bisphosphate). A 1,2-diacyl-sn-glycero-3-phospho-(1D-myo-inositol-3,4-bisphosphate) contacts are provided by Lys217 and Arg221.

In terms of assembly, monomer and homotetramer. Phosphatidylinositol 4,5-bisphosphate binding induces the formation of homotetramers. Phosphatidylinositol 3,4-bisphosphate is less efficient in inducing tetramerization.

The protein resides in the cytoplasm. Binds (+)-alpha-tocopherol, enhances its transfer between separate membranes, and stimulates its release from liver cells. Binds both phosphatidylinositol 3,4-bisphosphate and phosphatidylinositol 4,5-bisphosphate; the resulting conformation change is important for the release of the bound alpha-tocopherol. This is Alpha-tocopherol transfer protein (Ttpa) from Mus musculus (Mouse).